The following is a 395-amino-acid chain: Probable hercynylcysteine sulfoxide lyase (395 aa).

Positions 1–21 (MQDEAMRRSGANSPAGDSLAD) are disordered. Lys-220 is modified (N6-(pyridoxal phosphate)lysine).

Belongs to the class-V pyridoxal-phosphate-dependent aminotransferase family. EgtE subfamily. Requires pyridoxal 5'-phosphate as cofactor.

The catalysed reaction is S-(hercyn-2-yl)-L-cysteine S-oxide + AH2 + H(+) = ergothioneine + pyruvate + A + NH4(+). Its pathway is amino-acid biosynthesis; ergothioneine biosynthesis. Its function is as follows. Probably catalyzes the conversion of hercynylcysteine sulfoxide to ergothioneine. ERG is one of the major redox buffers which protects bacteria against redox stressors and antibiotics; loss of ERG or mycothiol (MSH, the other major redox buffer in this bacteria) leads to respiratory alterations and bioenergetic deficiencies that negatively impact virulence. The sequence is that of Probable hercynylcysteine sulfoxide lyase from Mycobacterium tuberculosis (strain CDC 1551 / Oshkosh).